We begin with the raw amino-acid sequence, 270 residues long: MTALTVPKKDTTALKQPSKQAEAILQAKDINIYYGENHAVKQLSLDINKNEILALIGPSGCGKSTFLRSINRMNDLIPSARVTGTLAYEGLNLLSDDVNVVALRKEIGMVFQKANPFPKSIYENLVHGLRFHNVKKKEWADIVEDSLKRAALWDEVKDRLHESALSLSGGQQQRLCIARTLALKPEVILLDEPASALDPIATAKVEELMVELKKNYTVVVVTHNMQQASRVSDRTAFFYNGELIEVNKTDVLFRNPEKKQTEDYISGRFG.

In terms of domain architecture, ABC transporter spans 25 to 265; it reads LQAKDINIYY…PEKKQTEDYI (241 aa). 57–64 provides a ligand contact to ATP; that stretch reads GPSGCGKS.

Belongs to the ABC transporter superfamily. Phosphate importer (TC 3.A.1.7) family. The complex is composed of two ATP-binding proteins (PstB), two transmembrane proteins (PstC and PstA) and a solute-binding protein (PstS).

It localises to the cell membrane. The catalysed reaction is phosphate(out) + ATP + H2O = ADP + 2 phosphate(in) + H(+). Functionally, part of the ABC transporter complex PstSACB involved in phosphate import. Responsible for energy coupling to the transport system. This chain is Phosphate import ATP-binding protein PstB 2, found in Shouchella clausii (strain KSM-K16) (Alkalihalobacillus clausii).